The primary structure comprises 254 residues: Triosephosphate isomerase (254 aa).

Residue 9–11 (NWK) coordinates substrate. Residue H96 is the Electrophile of the active site. The active-site Proton acceptor is E169. Substrate is bound by residues G175, S215, and 236–237 (GG).

It belongs to the triosephosphate isomerase family. Homodimer.

Its subcellular location is the cytoplasm. The catalysed reaction is D-glyceraldehyde 3-phosphate = dihydroxyacetone phosphate. The protein operates within carbohydrate biosynthesis; gluconeogenesis. Its pathway is carbohydrate degradation; glycolysis; D-glyceraldehyde 3-phosphate from glycerone phosphate: step 1/1. In terms of biological role, involved in the gluconeogenesis. Catalyzes stereospecifically the conversion of dihydroxyacetone phosphate (DHAP) to D-glyceraldehyde-3-phosphate (G3P). This is Triosephosphate isomerase from Borrelia recurrentis (strain A1).